Here is a 227-residue protein sequence, read N- to C-terminus: Lipoprotein-releasing system ATP-binding protein LolD (227 aa).

The ABC transporter domain occupies 7-227; it reads LKLTGVERHY…TISDGKVVEF (221 aa). 43-50 lines the ATP pocket; that stretch reads APSGTGKS.

The protein belongs to the ABC transporter superfamily. Lipoprotein translocase (TC 3.A.1.125) family. As to quaternary structure, the complex is composed of two ATP-binding proteins (LolD) and two transmembrane proteins (LolC and LolE).

The protein resides in the cell inner membrane. In terms of biological role, part of the ABC transporter complex LolCDE involved in the translocation of mature outer membrane-directed lipoproteins, from the inner membrane to the periplasmic chaperone, LolA. Responsible for the formation of the LolA-lipoprotein complex in an ATP-dependent manner. The sequence is that of Lipoprotein-releasing system ATP-binding protein LolD from Rhizobium etli (strain ATCC 51251 / DSM 11541 / JCM 21823 / NBRC 15573 / CFN 42).